Reading from the N-terminus, the 156-residue chain is MPRKGPAPKRPLVNDPVYGSQLVTQLVNKVLLKGKKSLAERIVYGALEQARDKTGTDPVITLKRALDNVKPALEVRSRRVGGATYQVPVEVRPDRSTTLALRWLVGYSRQRREKTMIERLANEILDASNGLGASVKRREDTHKMAEANRAFAHYRW.

This sequence belongs to the universal ribosomal protein uS7 family. Part of the 30S ribosomal subunit. Contacts proteins S9 and S11.

Its function is as follows. One of the primary rRNA binding proteins, it binds directly to 16S rRNA where it nucleates assembly of the head domain of the 30S subunit. Is located at the subunit interface close to the decoding center, probably blocks exit of the E-site tRNA. The chain is Small ribosomal subunit protein uS7 from Mycobacterium bovis (strain ATCC BAA-935 / AF2122/97).